We begin with the raw amino-acid sequence, 114 residues long: Hydrogenase maturation factor HypA (114 aa).

Histidine 2 is a Ni(2+) binding site. Residues cysteine 73, cysteine 76, cysteine 89, and cysteine 92 each coordinate Zn(2+).

Belongs to the HypA/HybF family.

Involved in the maturation of [NiFe] hydrogenases. Required for nickel insertion into the metal center of the hydrogenase. The protein is Hydrogenase maturation factor HypA of Desulfitobacterium hafniense (strain DSM 10664 / DCB-2).